The primary structure comprises 345 residues: MNPYILSIMLISLGLGTTLTFASSNWLLAWMGLEINTLAIIPLMANNHHPRAVEAATKYFITQAAAAALLLFSSLINAWQSGQWMIQDMSMPMSALMTIAIAIKLGVAPVHFWLPEVMQGIKLNTGLILATWQKLAPLALLYQISNNLMPELMIALGLMSTIVGGWGGLNQTQIRKIMAYSSIAHLGWIISIMHFMPSLAIINLIMYIIMTTTMFMIFNTLNSTTINALAINWSKFPALSAITMLALLSLGGLPPLSGFLPKWLILQELTNQNLALTATVMALSALLSLYFYLRLSYSLTTTIMPNTYQHMLNWNIKTKITFILPTMMIMTIAMLPISPSIISMF.

10 helical membrane passes run 3-23 (PYIL…TFAS), 25-45 (NWLL…PLMA), 59-79 (YFIT…INAW), 95-115 (ALMT…FWLP), 148-168 (LMPE…GWGG), 177-196 (IMAY…MHFM), 201-223 (IINL…TLNS), 236-256 (FPAL…LPPL), 273-293 (NLAL…YFYL), and 322-342 (FILP…PSII).

Belongs to the complex I subunit 2 family.

It is found in the mitochondrion inner membrane. The enzyme catalyses a ubiquinone + NADH + 5 H(+)(in) = a ubiquinol + NAD(+) + 4 H(+)(out). Its function is as follows. Core subunit of the mitochondrial membrane respiratory chain NADH dehydrogenase (Complex I) that is believed to belong to the minimal assembly required for catalysis. Complex I functions in the transfer of electrons from NADH to the respiratory chain. The immediate electron acceptor for the enzyme is believed to be ubiquinone. The polypeptide is NADH-ubiquinone oxidoreductase chain 2 (MT-ND2) (Polypterus ornatipinnis (Ornate bichir)).